Reading from the N-terminus, the 61-residue chain is Rubredoxin 3 (61 aa).

One can recognise a Rubredoxin-like domain in the interval 1-53; the sequence is MSSYRCPVCEYVYDESKGAPREGFPAGTPWDAVPDDWCCPDCGVREKLDFEPM. Positions 6, 9, 39, and 42 each coordinate Fe cation.

It belongs to the rubredoxin family. Requires Fe(3+) as cofactor.

Its function is as follows. Involved in the hydrocarbon hydroxylating system, which transfers electrons from NADH to rubredoxin reductase and then through rubredoxin to alkane 1 monooxygenase. This Rhodococcus erythropolis (Arthrobacter picolinophilus) protein is Rubredoxin 3 (rubA3).